Reading from the N-terminus, the 195-residue chain is MAQNLLFCTIAFVFVAVAMAGPGGRGGPHGPGGHGPRGGPGLPPFLVNVTAAGRKEFEAVFKNETLTIAEANTQIAALAEKYGVTATYNEFVANRTALLAEVKKNQTAVIGNLTAVSAQLATIYQNKDQTRKAQEEAVDALRKEHPVEVNAIKFIRAQLGGEKVHGGSHGGLRGGPGGPRDGPRGGPRGGPRGGR.

Residues 162 to 195 (EKVHGGSHGGLRGGPGGPRDGPRGGPRGGPRGGR) form a disordered region. Gly residues predominate over residues 167 to 195 (GSHGGLRGGPGGPRDGPRGGPRGGPRGGR).

This sequence belongs to the SXP/RAL-2 family.

This is SXP/RAL-2-like protein 2 from Caenorhabditis elegans.